We begin with the raw amino-acid sequence, 567 residues long: Diphtheria toxin (567 aa).

A signal peptide spans 1–32; it reads MLVRGYVVSRKLFASILIGALLGIGAPPSAHA. Residues His53 and Tyr97 each contribute to the NAD(+) site. Glu180 is an active-site residue. 2 disulfides stabilise this stretch: Cys218/Cys233 and Cys493/Cys503.

As to quaternary structure, homodimer. In terms of processing, proteolytic activation by host furin cleaves the protein in two parts, Diphtheria toxin fragment A and Diphtheria toxin fragment B; which remain associated via a disulfide bond.

It carries out the reaction diphthamide-[translation elongation factor 2] + NAD(+) = N-(ADP-D-ribosyl)diphthamide-[translation elongation factor 2] + nicotinamide + H(+). Its activity is regulated as follows. Partially inhibited by 1,8-naphthalimide (NAP). Diphtheria toxin, produced by a phage infecting Corynebacterium diphtheriae, is a proenzyme that, after activation, catalyzes the covalent attachment of the ADP ribose moiety of NAD to eukaryotic elongation factor 2 (eEF-2). Fragment A is the catalytic portion responsible for enzymatic ADP-ribosylation of elongation factor 2, while fragment B is responsible for binding of toxin to cell receptors and entry of fragment A. This chain is Diphtheria toxin, found in Corynebacterium diphtheriae.